Reading from the N-terminus, the 331-residue chain is Ketol-acid reductoisomerase (NADP(+)) (331 aa).

Positions 2 to 182 (AQLFYDSDAD…GGTRAGILET (181 aa)) constitute a KARI N-terminal Rossmann domain. Residues 25-28 (YGSQ), Ser51, Ser53, and 83-86 (DEFQ) contribute to the NADP(+) site. The active site involves His108. Gly134 lines the NADP(+) pocket. The region spanning 183–328 (NFKEETETDL…KGLRAMFSWL (146 aa)) is the KARI C-terminal knotted domain. The Mg(2+) site is built by Asp191, Glu195, Glu227, and Glu231. Ser252 contacts substrate.

Belongs to the ketol-acid reductoisomerase family. The cofactor is Mg(2+).

The catalysed reaction is (2R)-2,3-dihydroxy-3-methylbutanoate + NADP(+) = (2S)-2-acetolactate + NADPH + H(+). It catalyses the reaction (2R,3R)-2,3-dihydroxy-3-methylpentanoate + NADP(+) = (S)-2-ethyl-2-hydroxy-3-oxobutanoate + NADPH + H(+). The protein operates within amino-acid biosynthesis; L-isoleucine biosynthesis; L-isoleucine from 2-oxobutanoate: step 2/4. Its pathway is amino-acid biosynthesis; L-valine biosynthesis; L-valine from pyruvate: step 2/4. Functionally, involved in the biosynthesis of branched-chain amino acids (BCAA). Catalyzes an alkyl-migration followed by a ketol-acid reduction of (S)-2-acetolactate (S2AL) to yield (R)-2,3-dihydroxy-isovalerate. In the isomerase reaction, S2AL is rearranged via a Mg-dependent methyl migration to produce 3-hydroxy-3-methyl-2-ketobutyrate (HMKB). In the reductase reaction, this 2-ketoacid undergoes a metal-dependent reduction by NADPH to yield (R)-2,3-dihydroxy-isovalerate. The protein is Ketol-acid reductoisomerase (NADP(+)) of Prochlorococcus marinus (strain MIT 9313).